The following is a 314-amino-acid chain: BURP domain-containing protein 8 (314 aa).

The N-terminal stretch at 1 to 16 is a signal peptide; it reads MDLVRLTSLLPPSVMG. A BURP domain is found at 98–314; sequence FFLEKDLFPG…PLGDMLWVRN (217 aa).

As to expression, expressed in shoot and panicles.

The sequence is that of BURP domain-containing protein 8 (BURP8) from Oryza sativa subsp. japonica (Rice).